Here is a 659-residue protein sequence, read N- to C-terminus: tRNA-guanine(15) transglycosylase (659 aa).

D84 (nucleophile) is an active-site residue. Residues D119 and A190 each contribute to the substrate site. The Zn(2+) site is built by C273, C275, and C278. One can recognise a PUA domain in the interval 583-658; the sequence is KNRVVVNKDS…QAIKTRKGMK (76 aa).

This sequence belongs to the archaeosine tRNA-ribosyltransferase family. Zn(2+) serves as cofactor.

The enzyme catalyses guanosine(15) in tRNA + 7-cyano-7-deazaguanine = 7-cyano-7-carbaguanosine(15) in tRNA + guanine. The protein operates within tRNA modification; archaeosine-tRNA biosynthesis. In terms of biological role, exchanges the guanine residue with 7-cyano-7-deazaguanine (preQ0) at position 15 in the dihydrouridine loop (D-loop) of archaeal tRNAs. This chain is tRNA-guanine(15) transglycosylase, found in Methanobrevibacter smithii (strain ATCC 35061 / DSM 861 / OCM 144 / PS).